Reading from the N-terminus, the 333-residue chain is Autoinducer 2 import system permease protein LsrD (333 aa).

The next 10 helical transmembrane spans lie at 7-27, 45-65, 70-90, 91-111, 118-138, 162-182, 212-232, 240-260, 261-281, and 288-308; these read YGWE…FGIA, ICIG…GIDI, TIGL…PMAA, AIPL…ALIL, LVIT…LSGI, LFGL…CWLF, TLYL…IVLV, SDLG…GGAN, IYGG…IGYL, and AGVP…IAVV.

Belongs to the binding-protein-dependent transport system permease family. AraH/RbsC subfamily. As to quaternary structure, the complex is composed of two ATP-binding proteins (LsrA), two transmembrane proteins (LsrC and LsrD) and a solute-binding protein (LsrB).

The protein resides in the cell inner membrane. Part of the ABC transporter complex LsrABCD involved in autoinducer 2 (AI-2) import. Probably responsible for the translocation of the substrate across the membrane. The polypeptide is Autoinducer 2 import system permease protein LsrD (lsrD) (Photorhabdus laumondii subsp. laumondii (strain DSM 15139 / CIP 105565 / TT01) (Photorhabdus luminescens subsp. laumondii)).